Reading from the N-terminus, the 403-residue chain is Tryptophan synthase beta chain (403 aa).

Position 90 is an N6-(pyridoxal phosphate)lysine (Lys-90).

The protein belongs to the TrpB family. In terms of assembly, tetramer of two alpha and two beta chains. Pyridoxal 5'-phosphate is required as a cofactor.

The enzyme catalyses (1S,2R)-1-C-(indol-3-yl)glycerol 3-phosphate + L-serine = D-glyceraldehyde 3-phosphate + L-tryptophan + H2O. It functions in the pathway amino-acid biosynthesis; L-tryptophan biosynthesis; L-tryptophan from chorismate: step 5/5. Its function is as follows. The beta subunit is responsible for the synthesis of L-tryptophan from indole and L-serine. This Leifsonia xyli subsp. xyli (strain CTCB07) protein is Tryptophan synthase beta chain.